The following is a 325-amino-acid chain: Retinal homeobox protein Rx-B (325 aa).

The Octapeptide motif motif lies at 32-39 (HSIEAILG). Residues 75 to 87 (TEEIHPQQEHLED) show a composition bias toward basic and acidic residues. Residues 75 to 136 (TEEIHPQQEH…KKKHRRNRTT (62 aa)) are disordered. The span at 99 to 117 (AKTSSECLSPGLSTSNSDN) shows a compositional bias: polar residues. The segment at residues 130–189 (HRRNRTTFTTYQLHELERAFEKSHYPDVYSREELAMKVNLPEVRVQVWFQNRRAKWRRQE) is a DNA-binding region (homeobox). Positions 302–315 (NSIASLRMKAKEHI) match the OAR motif. Residues 308–312 (RMKAK) carry the Nuclear localization signal motif.

It belongs to the paired homeobox family. Bicoid subfamily. Highly expressed in anterior neural plate followed by neural retina, pigmented epithelium, in pineal gland, diencephalon floor and epiphysis. At later stages, the neuroretina remains the primary site of expression. No expression in the developing lens and cornea.

It localises to the nucleus. In terms of biological role, plays a critical role in eye formation by regulating the initial specification of retinal cells and/or their subsequent proliferation. In Xenopus laevis (African clawed frog), this protein is Retinal homeobox protein Rx-B (rax-b).